A 726-amino-acid chain; its full sequence is MSTSDDIHNTTATGKCPFHQGGHDQSAGAGTTTRDWWPNQLRVDLLNQHSNRSNPLGEDFDYRKEFSKLDYYGLKKDLKALLTESQPWWPADWGSYAGLFIRMAWHGAGTYRSIDGRGGAGRGQQRFAPLNSWPDNVSLDKARRLLWPIKQKYGQKISWADLFILAGNVALENSGFRTFGFGAGREDVWEPDLDVNWGDEKAWLTHRHPEALAKAPLGATEMGLIYVNPEGPDHSGEPLSAAAAIRATFGNMGMNDEETVALIAGGHTLGKTHGAGPTSNVGPDPEAAPIEEQGLGWASTYGSGVGADAITSGLEVVWTQTPTQWSNYFFENLFKYEWVQTRSPAGAIQFEAVDAPEIIPDPFDPSKKRKPTMLVTDLTLRFDPEFEKISRRFLNDPQAFNEAFARAWFKLTHRDMGPKSRYIGPEVPKEDLIWQDPLPQPIYNPTEQDIIDLKFAIADSGLSVSELVSVAWASASTFRGGDKRGGANGARLALMPQRDWDVNAAAVRALPVLEKIQKESGKASLADIIVLAGVVGVEKAASAAGLSIHVPFAPGRVDARQDQTDIEMFELLEPIADGFRNYRARLDVSTTESLLIDKAQQLTLTAPEMTALVGGMRVLGAYFDGSKNGVFTDRVGVLSNDFFVNLLDMRYEWKATDESKELFEGRDRETGEVKYTASRADLVFGSNSVLRAVAEVYASSDAHEKFVKDFVAAWVKVMNLDRFDLL.

Residues 1–33 (MSTSDDIHNTTATGKCPFHQGGHDQSAGAGTTT) are disordered. The tryptophyl-tyrosyl-methioninium (Trp-Tyr) (with M-252) cross-link spans 105-226 (WHGAGTYRSI…LGATEMGLIY (122 aa)). Residue histidine 106 is the Proton acceptor of the active site. The tryptophyl-tyrosyl-methioninium (Tyr-Met) (with W-105) cross-link spans 226-252 (YVNPEGPDHSGEPLSAAAAIRATFGNM). Histidine 267 provides a ligand contact to heme b.

This sequence belongs to the peroxidase family. Peroxidase/catalase subfamily. In terms of assembly, homodimer or homotetramer. Heme b serves as cofactor. In terms of processing, formation of the three residue Trp-Tyr-Met cross-link is important for the catalase, but not the peroxidase activity of the enzyme.

It carries out the reaction H2O2 + AH2 = A + 2 H2O. It catalyses the reaction 2 H2O2 = O2 + 2 H2O. Bifunctional enzyme with both catalase and broad-spectrum peroxidase activity. The sequence is that of Catalase-peroxidase from Shigella flexneri.